The following is a 337-amino-acid chain: Heat-inducible transcription repressor HrcA (337 aa).

This sequence belongs to the HrcA family.

Its function is as follows. Negative regulator of class I heat shock genes (grpE-dnaK-dnaJ and groELS operons). Prevents heat-shock induction of these operons. In Nocardioides sp. (strain ATCC BAA-499 / JS614), this protein is Heat-inducible transcription repressor HrcA.